Consider the following 873-residue polypeptide: Nitrate reductase [NADPH] (873 aa).

Residues 30–61 (TELDTADIPLPPPSKEPTEVLSLDKTTPDSHV) are disordered. Cysteine 150 contributes to the Mo-molybdopterin binding site. Positions 512–587 (TRIIDLEEFK…MPDYHIGTLD (76 aa)) constitute a Cytochrome b5 heme-binding domain. Positions 547 and 570 each coordinate heme. The FAD-binding FR-type domain maps to 616-729 (KAWTKATLTK…KGPTGRFEYL (114 aa)). FAD-binding positions include 672–675 (RSYT), 689–693 (LIKIY), 703–705 (KMT), and threonine 756. Residue 843–852 (MVLVCGPEAM) participates in NADP(+) binding.

It belongs to the nitrate reductase family. As to quaternary structure, homodimer. The cofactor is FAD. Heme is required as a cofactor. Requires Mo-molybdopterin as cofactor.

The catalysed reaction is nitrite + NADP(+) + H2O = nitrate + NADPH + H(+). Its function is as follows. Nitrate reductase is a key enzyme involved in the first step of nitrate assimilation in plants, fungi and bacteria. This chain is Nitrate reductase [NADPH] (niaD), found in Emericella nidulans (strain FGSC A4 / ATCC 38163 / CBS 112.46 / NRRL 194 / M139) (Aspergillus nidulans).